A 106-amino-acid chain; its full sequence is uncharacterized protein (106 aa).

This is an uncharacterized protein from Homo sapiens (Human).